The sequence spans 74 residues: Translation initiation factor IF-1 (74 aa).

The region spanning 1–72 (MGKEDVIRME…TRGRIVYRKK (72 aa)) is the S1-like domain.

The protein belongs to the IF-1 family. In terms of assembly, component of the 30S ribosomal translation pre-initiation complex which assembles on the 30S ribosome in the order IF-2 and IF-3, IF-1 and N-formylmethionyl-tRNA(fMet); mRNA recruitment can occur at any time during PIC assembly.

The protein resides in the cytoplasm. Functionally, one of the essential components for the initiation of protein synthesis. Stabilizes the binding of IF-2 and IF-3 on the 30S subunit to which N-formylmethionyl-tRNA(fMet) subsequently binds. Helps modulate mRNA selection, yielding the 30S pre-initiation complex (PIC). Upon addition of the 50S ribosomal subunit IF-1, IF-2 and IF-3 are released leaving the mature 70S translation initiation complex. The chain is Translation initiation factor IF-1 from Thermotoga maritima (strain ATCC 43589 / DSM 3109 / JCM 10099 / NBRC 100826 / MSB8).